The sequence spans 439 residues: Methionine aminopeptidase 2-2 (439 aa).

The interval methionine 1–proline 90 is disordered. A compositionally biased stretch (basic and acidic residues) spans glutamate 10–proline 23. A compositionally biased stretch (acidic residues) spans aspartate 35–aspartate 45. Residues alanine 54 to asparagine 68 show a composition bias toward basic residues. A substrate-binding site is contributed by histidine 192. Residues aspartate 212, aspartate 223, and histidine 292 each contribute to the a divalent metal cation site. Position 300 (histidine 300) interacts with substrate. A divalent metal cation is bound by residues glutamate 325 and glutamate 420.

The protein belongs to the peptidase M24A family. Methionine aminopeptidase eukaryotic type 2 subfamily. Requires Co(2+) as cofactor. Zn(2+) is required as a cofactor. The cofactor is Mn(2+). It depends on Fe(2+) as a cofactor.

Its subcellular location is the cytoplasm. It catalyses the reaction Release of N-terminal amino acids, preferentially methionine, from peptides and arylamides.. In terms of biological role, cotranslationally removes the N-terminal methionine from nascent proteins. The N-terminal methionine is often cleaved when the second residue in the primary sequence is small and uncharged (Met-Ala-, Cys, Gly, Pro, Ser, Thr, or Val). The protein is Methionine aminopeptidase 2-2 of Chaetomium globosum (strain ATCC 6205 / CBS 148.51 / DSM 1962 / NBRC 6347 / NRRL 1970) (Soil fungus).